A 115-amino-acid chain; its full sequence is U3-lycotoxin-Ls1f (115 aa).

A signal peptide spans M1 to A20. The propeptide occupies E21–R44. Cystine bridges form between C48–C63, C55–C72, C62–C87, and C74–C85.

It belongs to the neurotoxin 19 (CSTX) family. 01 subfamily. Expressed by the venom gland.

The protein resides in the secreted. The sequence is that of U3-lycotoxin-Ls1f from Lycosa singoriensis (Wolf spider).